A 382-amino-acid chain; its full sequence is MYIAGVMSGTSLDGIDVALVRIEGSGVESKVELIHFTTVPFCNDIKSEIQQALSIENSNVQLICSLNFKLGLCFANAVKEVCKEANFSLEQLDLIGSHGQTIYHQPKQDGNRIPSTLQIGEPAVIAYETNTTVISNFRTMDMAAGGQGAPLVPYSEVILYRDPSKNRLLQNIGGISNVTVIPNQQSDQNVIAFDTGPGNMIIDEVCQRLFQLSYDQNGEIAKQGRVVDEILTYCMSHPFLKMNPPKSTGREQFGEKFASELLKRFEKHSKENILTTVTMFTANSIVHHYKKFILPYYEIDEVILGGGGSYNSTLVEMLRNGLKDENCAIFIQEDIGYSSEAKEAIAFAILANETHHCNPSNVPSATGAKQSVVFGNITFPPV.

Residue 9–16 coordinates ATP; that stretch reads GTSLDGID.

The protein belongs to the anhydro-N-acetylmuramic acid kinase family.

The enzyme catalyses 1,6-anhydro-N-acetyl-beta-muramate + ATP + H2O = N-acetyl-D-muramate 6-phosphate + ADP + H(+). It functions in the pathway amino-sugar metabolism; 1,6-anhydro-N-acetylmuramate degradation. The protein operates within cell wall biogenesis; peptidoglycan recycling. Catalyzes the specific phosphorylation of 1,6-anhydro-N-acetylmuramic acid (anhMurNAc) with the simultaneous cleavage of the 1,6-anhydro ring, generating MurNAc-6-P. Is required for the utilization of anhMurNAc either imported from the medium or derived from its own cell wall murein, and thus plays a role in cell wall recycling. The sequence is that of Anhydro-N-acetylmuramic acid kinase from Bacillus anthracis (strain A0248).